The following is a 228-amino-acid chain: Endolytic peptidoglycan transglycosylase RlpA (228 aa).

A signal peptide spans 1-23; sequence MIQRHKLIVLIFLLIFCLSGCNT.

This sequence belongs to the RlpA family.

In terms of biological role, lytic transglycosylase with a strong preference for naked glycan strands that lack stem peptides. This chain is Endolytic peptidoglycan transglycosylase RlpA, found in Rickettsia felis (strain ATCC VR-1525 / URRWXCal2) (Rickettsia azadi).